The primary structure comprises 89 residues: Dynein light chain LC6, flagellar outer arm (89 aa).

The protein belongs to the dynein light chain family. As to quaternary structure, consists of at least 3 heavy chains (alpha, beta and gamma), 2 intermediate chains and 8 light chains.

Its subcellular location is the cytoplasm. It is found in the cytoskeleton. The protein resides in the flagellum axoneme. The protein is Dynein light chain LC6, flagellar outer arm of Heliocidaris crassispina (Sea urchin).